The following is a 163-amino-acid chain: Low molecular weight protein-tyrosine phosphatase A (163 aa).

Residue cysteine 11 is the Nucleophile of the active site. The active site involves arginine 17. Aspartate 126 serves as the catalytic Proton donor.

The protein belongs to the low molecular weight phosphotyrosine protein phosphatase family.

It catalyses the reaction O-phospho-L-tyrosyl-[protein] + H2O = L-tyrosyl-[protein] + phosphate. In terms of biological role, key virulence factor required for mycobacterial survival within host macrophages. Exhibits protein tyrosine phosphatase activity. Its function is as follows. Supports mycobacteria survival during infection by modulation of the phagosome maturation and modulation of the normal host signaling pathways, including host innate immune responses and cell apoptosis. In Mycobacterium bovis (strain ATCC BAA-935 / AF2122/97), this protein is Low molecular weight protein-tyrosine phosphatase A (ptpA).